A 526-amino-acid polypeptide reads, in one-letter code: Glucose-6-phosphate isomerase (526 aa).

E320 (proton donor) is an active-site residue. Active-site residues include H349 and K453.

The protein belongs to the GPI family.

The protein resides in the cytoplasm. The enzyme catalyses alpha-D-glucose 6-phosphate = beta-D-fructose 6-phosphate. It participates in carbohydrate biosynthesis; gluconeogenesis. Its pathway is carbohydrate degradation; glycolysis; D-glyceraldehyde 3-phosphate and glycerone phosphate from D-glucose: step 2/4. Functionally, catalyzes the reversible isomerization of glucose-6-phosphate to fructose-6-phosphate. This chain is Glucose-6-phosphate isomerase, found in Gloeothece citriformis (strain PCC 7424) (Cyanothece sp. (strain PCC 7424)).